Consider the following 364-residue polypeptide: Putative acetyl-CoA C-acetyltransferase YhfS (364 aa).

Cys-82 (acyl-thioester intermediate) is an active-site residue. His-318 (proton acceptor) is an active-site residue.

This sequence belongs to the thiolase-like superfamily. Thiolase family.

In terms of biological role, may be involved in fatty acid metabolism. This Bacillus subtilis (strain 168) protein is Putative acetyl-CoA C-acetyltransferase YhfS (yhfS).